The chain runs to 24 residues: Ascaphin-7 (24 aa).

Expressed by the skin glands.

The protein resides in the secreted. Its function is as follows. Antimicrobial peptide that shows higher potency against Gram-negative bacteria than against Gram-positive bacteria. Has a very week hemolytic activity. This is Ascaphin-7 from Ascaphus truei (Coastal tailed frog).